Here is a 310-residue protein sequence, read N- to C-terminus: Syntaxin-81 (310 aa).

At 1–289 (MSRFRDRTED…QAIQRNSSSR (289 aa)) the chain is on the cytoplasmic side. The stretch at 77 to 114 (RTTEQEKDSIEQEVAAFIKACKEQIDILINSIRNEEAN) forms a coiled coil. The helical; Anchor for type IV membrane protein transmembrane segment at 290–310 (TFLLLFFFVLTFSVLFLDWYS) threads the bilayer.

This sequence belongs to the syntaxin family. Part of the t-SNARE complex. Interacts with MAG2.

It localises to the membrane. Vesicle trafficking protein that functions in the secretory pathway. This chain is Syntaxin-81 (SYP81), found in Arabidopsis thaliana (Mouse-ear cress).